Consider the following 214-residue polypeptide: MRVRYKPWAEDYLKDHPELVDMDGQHAGKMTEWFDKTQPIHIEIGSGMGQFITTLAAQNPHINYISMEREKSIVYKVLDKVKEMGLTNLKIICNDAIELNEYFKDGEVSRIYLNFSDPWPKNRHAKRRLTYHTFLALYQQILNDEGDLHFKTDNRGLFAYSLESMSQFGMYFTKINLNLHQEDDGSNILTEYEKKFSDKGSRIYRMEAKFHSQK.

S-adenosyl-L-methionine is bound by residues Glu-43, Glu-68, Asp-95, and Asp-117. The active site involves Asp-117. Residues Lys-121, Asp-153, and 190–193 (TEYE) contribute to the substrate site.

It belongs to the class I-like SAM-binding methyltransferase superfamily. TrmB family.

The catalysed reaction is guanosine(46) in tRNA + S-adenosyl-L-methionine = N(7)-methylguanosine(46) in tRNA + S-adenosyl-L-homocysteine. Its pathway is tRNA modification; N(7)-methylguanine-tRNA biosynthesis. Catalyzes the formation of N(7)-methylguanine at position 46 (m7G46) in tRNA. This chain is tRNA (guanine-N(7)-)-methyltransferase, found in Staphylococcus aureus (strain USA300).